Here is a 241-residue protein sequence, read N- to C-terminus: Proteasome subunit beta type-1 (241 aa).

The residue at position 1 (Met1) is an N-acetylmethionine. Residues 1–28 constitute a propeptide that is removed on maturation; it reads MLSSVAAYSGAGRDLAMEPHSSVGPLQL. Ser58 carries O-linked (GlcNAc) serine glycosylation. 2 positions are modified to phosphoserine: Ser62 and Ser68. Phosphotyrosine is present on Tyr150. Position 162 is a phosphoserine (Ser162). Lys204 bears the N6-acetyllysine mark. Ser209 carries an O-linked (GlcNAc) serine glycan.

Belongs to the peptidase T1B family. In terms of assembly, the 26S proteasome consists of a 20S proteasome core and two 19S regulatory subunits. The 20S proteasome core is a barrel-shaped complex made of 28 subunits that are arranged in four stacked rings. The two outer rings are each formed by seven alpha subunits, and the two inner rings are formed by seven beta subunits. The proteolytic activity is exerted by three beta-subunits PSMB5, PSMB6 and PSMB7. Interacts with SERPINB2. Interacts with RFPL4A.

Its subcellular location is the cytoplasm. It localises to the nucleus. Its function is as follows. Non-catalytic component of the 20S core proteasome complex involved in the proteolytic degradation of most intracellular proteins. This complex plays numerous essential roles within the cell by associating with different regulatory particles. Associated with two 19S regulatory particles, forms the 26S proteasome and thus participates in the ATP-dependent degradation of ubiquitinated proteins. The 26S proteasome plays a key role in the maintenance of protein homeostasis by removing misfolded or damaged proteins that could impair cellular functions, and by removing proteins whose functions are no longer required. Associated with the PA200 or PA28, the 20S proteasome mediates ubiquitin-independent protein degradation. This type of proteolysis is required in several pathways including spermatogenesis (20S-PA200 complex) or generation of a subset of MHC class I-presented antigenic peptides (20S-PA28 complex). The protein is Proteasome subunit beta type-1 (PSMB1) of Bos taurus (Bovine).